The chain runs to 354 residues: Protein CbrA (354 aa).

This sequence belongs to the CbrA family.

The polypeptide is Protein CbrA (cbrA) (Escherichia coli (strain K12)).